Consider the following 783-residue polypeptide: BMP/retinoic acid-inducible neural-specific protein 2 (783 aa).

Positions 1–33 (MRWQCGTRFRGLRPVVAPWTALLALGLPGWVLA) are cleaved as a signal peptide. Residues 85–281 (RYRIYREFAR…FVAAALSYIT (197 aa)) enclose the MACPF domain. Residues N185, N354, N473, N579, N626, and N658 are each glycosylated (N-linked (GlcNAc...) asparagine).

The protein belongs to the BRINP family.

The protein resides in the secreted. Inhibits neuronal cell proliferation by negative regulation of the cell cycle transition. The protein is BMP/retinoic acid-inducible neural-specific protein 2 (BRINP2) of Pongo abelii (Sumatran orangutan).